A 562-amino-acid polypeptide reads, in one-letter code: MDDHKRPLYLPFAGPAILEAPLINKGSAFTDEERVFFNLEGLLPHVIETIEEQASRAYDQYTNFTNDLDRHIYLRNIQDTNETLYYRLVQNHITEMMPIIYTPTVGMACERFSKNYRRNRGLFISYPHKDRIEDILNNSTRQKVKIIVVTDGERILGLGDQGIGGMGIPIGKLSLYTSCGGISPAYTLPITLDVGTDNPHLLEDPMYMGWRNQRIGGEEYKEFVEAFMQAVNRRWPDALIQFEDFAQKNAMPLLERYKDQYCCFNDDIQGTAAVTVGSLLAACKAAKSQLCEQRIAFLGAGSAGCGIAEAIVAQMVSEGIDEAQARSQVFMVDRWGLLQDNMPNLLNFQEKLAQKTQAVKDWTIENGNISLLDVMNNAKPTVLIGVSGAPGLFSEEIIKAMHQHCPRPIVFPLSNPTSRVEATPKDVLHWTNGQALVATGSPFEPVALNGETFEIAQCNNSYIFPGIGLGVLSAGAKRVSDEMLMASSRALAECSPLALNGEGPLLPPLEEIHQVSKHIAFAVAKVAVEQGHALPCTDELLAQSIENNFWTAEYRRYKRTSF.

Residue Tyr-101 is the Proton donor of the active site. An NAD(+)-binding site is contributed by Arg-154. Lys-172 acts as the Proton acceptor in catalysis. A divalent metal cation-binding residues include Glu-243, Asp-244, and Asp-267. Residues Asp-267 and Asn-415 each coordinate NAD(+).

The protein belongs to the malic enzymes family. Homotetramer. Mg(2+) serves as cofactor. Mn(2+) is required as a cofactor.

It catalyses the reaction (S)-malate + NAD(+) = pyruvate + CO2 + NADH. The catalysed reaction is oxaloacetate + H(+) = pyruvate + CO2. This Shewanella woodyi (strain ATCC 51908 / MS32) protein is NAD-dependent malic enzyme.